Here is a 129-residue protein sequence, read N- to C-terminus: Small ribosomal subunit protein uS11 (129 aa).

Belongs to the universal ribosomal protein uS11 family. Part of the 30S ribosomal subunit. Interacts with proteins S7 and S18. Binds to IF-3.

Functionally, located on the platform of the 30S subunit, it bridges several disparate RNA helices of the 16S rRNA. Forms part of the Shine-Dalgarno cleft in the 70S ribosome. In Zymomonas mobilis subsp. mobilis (strain ATCC 31821 / ZM4 / CP4), this protein is Small ribosomal subunit protein uS11.